Consider the following 128-residue polypeptide: Large ribosomal subunit protein bL12 (128 aa).

Belongs to the bacterial ribosomal protein bL12 family. As to quaternary structure, homodimer. Part of the ribosomal stalk of the 50S ribosomal subunit. Forms a multimeric L10(L12)X complex, where L10 forms an elongated spine to which 2 to 4 L12 dimers bind in a sequential fashion. Binds GTP-bound translation factors.

Its function is as follows. Forms part of the ribosomal stalk which helps the ribosome interact with GTP-bound translation factors. Is thus essential for accurate translation. The chain is Large ribosomal subunit protein bL12 from Synechococcus sp. (strain ATCC 27144 / PCC 6301 / SAUG 1402/1) (Anacystis nidulans).